We begin with the raw amino-acid sequence, 272 residues long: Hemin import ATP-binding protein HmuV (272 aa).

One can recognise an ABC transporter domain in the interval 2–255 (LNADHLHVAR…EPIARCYGFR (254 aa)). ATP is bound at residue 34–41 (GRNGAGKS).

The protein belongs to the ABC transporter superfamily. Heme (hemin) importer (TC 3.A.1.14.5) family. The complex is composed of two ATP-binding proteins (HmuV), two transmembrane proteins (HmuU) and a solute-binding protein (HmuT).

The protein resides in the cell inner membrane. In terms of biological role, part of the ABC transporter complex HmuTUV involved in hemin import. Responsible for energy coupling to the transport system. The protein is Hemin import ATP-binding protein HmuV of Burkholderia mallei (strain ATCC 23344).